Consider the following 88-residue polypeptide: MKYFVVALALAVALVCIAESTAYDVNEELENELDDLSDAAWLAKAAEDLQALDDFEESEESRSMWSGMWRRKLKKLRNALKKKLKGEK.

The signal sequence occupies residues 1–22 (MKYFVVALALAVALVCIAESTA). Positions 23-62 (YDVNEELENELDDLSDAAWLAKAAEDLQALDDFEESEESR) are excised as a propeptide. The Processing quadruplet motif motif lies at 59–62 (EESR).

Post-translationally, cleavage of the propeptide depends on the processing quadruplet motif (XXXR, with at least one of X being E). As to expression, expressed by the venom gland.

The protein resides in the secreted. Has antimicrobial activity against Gram-positive bacteria (A.globiformis VKM Ac-1112 (MIC=0.5 uM), and B.subtilis VKM B-501 (MIC=1.0 uM)), Gram-negative bacteria (E.coli DH5-alpha (MIC=1.0 uM), E.coli MH1 (MIC=0.7 uM), and P.aeruginosa PAO1 (MIC=4.1 uM)), and yeasts (P.pastoris GS115 (MIC=17 uM), and S.cerevisiae Y190 (MIC&gt;33 uM)). Has a moderate hemolytic activity against rabbit erythrocytes. Causes paralysis, but is not lethal when injected into insect (M.domestica) larvae. This Lachesana tarabaevi (Spider) protein is M-zodatoxin-Lt1a.